A 116-amino-acid polypeptide reads, in one-letter code: Ribosome-binding factor A (116 aa).

It belongs to the RbfA family. As to quaternary structure, monomer. Binds 30S ribosomal subunits, but not 50S ribosomal subunits or 70S ribosomes.

Its subcellular location is the cytoplasm. In terms of biological role, one of several proteins that assist in the late maturation steps of the functional core of the 30S ribosomal subunit. Associates with free 30S ribosomal subunits (but not with 30S subunits that are part of 70S ribosomes or polysomes). Required for efficient processing of 16S rRNA. May interact with the 5'-terminal helix region of 16S rRNA. This chain is Ribosome-binding factor A, found in Clostridium botulinum (strain Eklund 17B / Type B).